A 233-amino-acid chain; its full sequence is Histone H1-I (233 aa).

Disordered stretches follow at residues 1–55 (MSDS…HPPV) and 115–233 (TGAS…KKSK). The span at 17–29 (KAASPAKSPAKSP) shows a compositional bias: low complexity. The region spanning 51–125 (THPPVSEMVV…GASGSFKMPP (75 aa)) is the H15 domain. Basic and acidic residues-rich tracts occupy residues 128–137 (KKVDRPESAP) and 146–155 (TRVERKEKKV). 2 stretches are compositionally biased toward basic residues: residues 172 to 213 (AAKK…KPTP) and 223 to 233 (AAARKPAKKSK).

The protein belongs to the histone H1/H5 family.

It localises to the nucleus. It is found in the chromosome. Histones H1 are necessary for the condensation of nucleosome chains into higher-order structures. The polypeptide is Histone H1-I (Glyptotendipes barbipes (Midge)).